A 379-amino-acid chain; its full sequence is Putative 8-amino-7-oxononanoate synthase (379 aa).

Residue Arg21 coordinates substrate. Residue 97–98 (GY) coordinates pyridoxal 5'-phosphate. His122 serves as a coordination point for substrate. Pyridoxal 5'-phosphate-binding positions include Ser169, 194-197 (DDAH), and 223-226 (TLSK). At Lys226 the chain carries N6-(pyridoxal phosphate)lysine. Residue Thr340 coordinates substrate.

It belongs to the class-II pyridoxal-phosphate-dependent aminotransferase family. BioF subfamily. As to quaternary structure, homodimer. It depends on pyridoxal 5'-phosphate as a cofactor.

It catalyses the reaction 6-carboxyhexanoyl-[ACP] + L-alanine + H(+) = (8S)-8-amino-7-oxononanoate + holo-[ACP] + CO2. It functions in the pathway cofactor biosynthesis; biotin biosynthesis. In terms of biological role, catalyzes the decarboxylative condensation of pimeloyl-[acyl-carrier protein] and L-alanine to produce 8-amino-7-oxononanoate (AON), [acyl-carrier protein], and carbon dioxide. This chain is Putative 8-amino-7-oxononanoate synthase (bioF), found in Bacillus licheniformis (strain ATCC 14580 / DSM 13 / JCM 2505 / CCUG 7422 / NBRC 12200 / NCIMB 9375 / NCTC 10341 / NRRL NRS-1264 / Gibson 46).